Reading from the N-terminus, the 461-residue chain is Putative transcription initiation factor IIB-like protein (461 aa).

The disordered stretch occupies residues 113–142; the sequence is SESLENIQSENSENNDNFTDNNTKKSPTKS. A compositionally biased stretch (low complexity) spans 121–137; it reads SENSENNDNFTDNNTKK. The TFIIB-type zinc-finger motif lies at 141–173; that stretch reads KSRICSGCGSKGTLLEDQSSSVLVCSECGMIND. Cysteine 145, cysteine 165, and cysteine 168 together coordinate Zn(2+). 2 consecutive repeat copies span residues 246 to 327 and 360 to 430.

This sequence belongs to the TFIIB family.

The protein is Putative transcription initiation factor IIB-like protein of Acanthamoeba polyphaga mimivirus (APMV).